The primary structure comprises 350 residues: Inner membrane protein YhiM (350 aa).

Residues 1–2 (MN) lie on the Cytoplasmic side of the membrane. The helical transmembrane segment at 3–23 (IYIGWLFKLIPLIMGLICIAL) threads the bilayer. At 24-41 (GGFVLESSGQSEYFVAGH) the chain is on the periplasmic side. Residues 42–62 (VLISLAAICLALFTTAFIIIS) traverse the membrane as a helical segment. The Cytoplasmic portion of the chain corresponds to 63 to 74 (QLTRGVNTFYNT). The chain crosses the membrane as a helical span at residues 75–95 (LFPIIGYAGSIITMIWGWALL). Topologically, residues 96–104 (AGNDVMADE) are periplasmic. Residues 105–125 (FVAGHVIFGVGMIAACVSTVA) form a helical membrane-spanning segment. At 126-157 (ASSGHFLLIPKNAAGSKSDGTPVQAYSSLIGN) the chain is on the cytoplasmic side. A helical transmembrane segment spans residues 158 to 178 (CLIAVPVLLTLLGFIWSITLL). At 179–190 (RSADITPHYVAG) the chain is on the periplasmic side. The chain crosses the membrane as a helical span at residues 191–211 (HVLLGLTAICACLIGLVATIV). Residues 212-225 (HQTRNTFSTKEHWL) are Cytoplasmic-facing. A helical membrane pass occupies residues 226–246 (WCYWVIFLGSITVLQGIYVLV). Residues 247 to 257 (SSDASARLAPG) lie on the Periplasmic side of the membrane. A helical transmembrane segment spans residues 258-278 (IILICLGMICYSIFSKVWLLA). Residues 279-290 (LVWRRTCSLANR) lie on the Cytoplasmic side of the membrane. A helical transmembrane segment spans residues 291–311 (IPMIPVFTCLFCLFLASFLAE). The Periplasmic segment spans residues 312-324 (MAQTDMGYFIPSR). A helical membrane pass occupies residues 325–345 (VLVGLGAVCFTLFSIVSILEA). Over 346 to 350 (GSAKK) the chain is Cytoplasmic.

It is found in the cell inner membrane. The chain is Inner membrane protein YhiM (yhiM) from Escherichia coli (strain K12).